The primary structure comprises 260 residues: Indole-3-glycerol phosphate synthase (260 aa).

Belongs to the TrpC family.

It carries out the reaction 1-(2-carboxyphenylamino)-1-deoxy-D-ribulose 5-phosphate + H(+) = (1S,2R)-1-C-(indol-3-yl)glycerol 3-phosphate + CO2 + H2O. It participates in amino-acid biosynthesis; L-tryptophan biosynthesis; L-tryptophan from chorismate: step 4/5. The polypeptide is Indole-3-glycerol phosphate synthase (Leifsonia xyli subsp. xyli (strain CTCB07)).